The sequence spans 520 residues: UvrABC system protein C (520 aa).

The region spanning 11-89 (EEPGCYQFKD…IKKYQPKYNI (79 aa)) is the GIY-YIG domain. A UVR domain is found at 195–230 (QDLIYDLRKEMETFAAAEEYEKALVIRDRIAAIENL).

The protein belongs to the UvrC family. Interacts with UvrB in an incision complex.

It localises to the cytoplasm. Its function is as follows. The UvrABC repair system catalyzes the recognition and processing of DNA lesions. UvrC both incises the 5' and 3' sides of the lesion. The N-terminal half is responsible for the 3' incision and the C-terminal half is responsible for the 5' incision. This is UvrABC system protein C from Methanospirillum hungatei JF-1 (strain ATCC 27890 / DSM 864 / NBRC 100397 / JF-1).